The sequence spans 131 residues: Profilin-7 (131 aa).

Residues C13 and C115 are joined by a disulfide bond. The Involved in PIP2 interaction signature appears at 81 to 97; the sequence is AVIRGKKGAGGITIKKT. Residue T111 is modified to Phosphothreonine.

The protein belongs to the profilin family. As to quaternary structure, occurs in many kinds of cells as a complex with monomeric actin in a 1:1 ratio. In terms of processing, phosphorylated by MAP kinases.

Its subcellular location is the cytoplasm. The protein resides in the cytoskeleton. Functionally, binds to actin and affects the structure of the cytoskeleton. At high concentrations, profilin prevents the polymerization of actin, whereas it enhances it at low concentrations. In Olea europaea (Common olive), this protein is Profilin-7.